A 93-amino-acid chain; its full sequence is uncharacterized protein (93 aa).

The next 2 helical transmembrane spans lie at 8–28 and 54–74; these read FIGI…LLAS and ACFL…YLIL.

The protein resides in the cell membrane. This is an uncharacterized protein from Methanocaldococcus jannaschii (strain ATCC 43067 / DSM 2661 / JAL-1 / JCM 10045 / NBRC 100440) (Methanococcus jannaschii).